The following is a 255-amino-acid chain: uncharacterized protein (255 aa).

The protein belongs to the methyltransferase superfamily.

This is an uncharacterized protein from Mycobacterium marinum (strain ATCC BAA-535 / M).